The following is a 316-amino-acid chain: Methionyl-tRNA formyltransferase (316 aa).

Residue 111–114 participates in (6S)-5,6,7,8-tetrahydrofolate binding; the sequence is SLLP.

The protein belongs to the Fmt family.

The enzyme catalyses L-methionyl-tRNA(fMet) + (6R)-10-formyltetrahydrofolate = N-formyl-L-methionyl-tRNA(fMet) + (6S)-5,6,7,8-tetrahydrofolate + H(+). Attaches a formyl group to the free amino group of methionyl-tRNA(fMet). The formyl group appears to play a dual role in the initiator identity of N-formylmethionyl-tRNA by promoting its recognition by IF2 and preventing the misappropriation of this tRNA by the elongation apparatus. This is Methionyl-tRNA formyltransferase from Limosilactobacillus fermentum (strain NBRC 3956 / LMG 18251) (Lactobacillus fermentum).